The chain runs to 361 residues: Trans-enoyl reductase gkaC (361 aa).

Residues 15-357 (EDVGSFEISR…RREISGKKMV (343 aa)) enclose the Enoyl reductase (ER) domain. NADP(+) is bound by residues 48 to 51 (CDWK), 172 to 175 (SSAS), 195 to 198 (SPKN), Tyr213, 260 to 261 (FE), and 351 to 352 (IS).

This sequence belongs to the zinc-containing alcohol dehydrogenase family. In terms of assembly, monomer.

It functions in the pathway mycotoxin biosynthesis. In terms of biological role, trans-enoyl reductasee; part of the gene cluster that mediates the biosynthesis of GKK1032, fungal natural products containing a macrocyclic para-cyclophane connected to a decahydrofluorene ring system that show potent antitumor activities. Within the pathway, the PKS-NRPS gkaA, with the help of the trans-enoyl reductase gkaC, synthesize the polyketide-tyrosyl acyl thioester product which can be reductively off-loaded by the terminal reductase (R) domain in gkaA. The PKS module of gkaA acts in combination with the trans-acting enoyl reductase gkaC to produce a methylated polyketide attached to the ACP domain. In parallel, the adenylation (A) domain of the NRPS module activated L-tyrosine, which is then transferred to the ACP domain. The condensation (C) domain subsequently links this group to the polyketide chain, forming an enzyme-bound amide. The alpha/beta hydrolase gkaG is then required to catalyze the subsequent Knoevenagel condensation that affords the 3-pyrrolin-2-one ring, whereas the three proteins gkaB, gkadX and gkaZ then function synergistically to form the cyclophane. The sequence is that of Trans-enoyl reductase gkaC from Penicillium citrinum.